The chain runs to 258 residues: uncharacterized protein (258 aa).

Belongs to the IIV-6 219L family.

This is an uncharacterized protein from Aedes vexans (Inland floodwater mosquito).